The chain runs to 109 residues: LSM2-LSM8 complex subunit LSM8 (109 aa).

The Sm domain maps to 1 to 70; the sequence is MSATLKDYLN…IALVGLIDAE (70 aa).

The protein belongs to the snRNP Sm proteins family. Component of the heptameric LSM2-LSM8 complex that forms a seven-membered ring structure with a donut shape; an RNA strand can pass through the hole in the center of the ring structure. The LSm subunits are arranged in the order LSM8, LSM2, LSM3, LSM6, LSM5, LSM7 and LSM4. Component of the spliceosome U4/U6-U5 tri-snRNP complex composed of the U4, U6 and U5 snRNAs and at least PRP3, PRP4, PRP6, PRP8, PRP18, PRP31, PRP38, SNU13, SNU23, SNU66, SNU114, SPP381, SMB1, SMD1, SMD2, SMD3, SMX2, SMX3, LSM2, LSM3, LSM4, LSM5, LSM6, LSM7, LSM8, BRR2 and DIB1.

The protein localises to the nucleus. It is found in the cytoplasm. Functionally, component of the nuclear LSM2-LSM8 complex, which is involved in spliceosome assembly. The LSM2-LSM8 complex plays a role in the biogenesis of the spliceosomal U4/U6-U5 tri-snRNP complex by accelerating PRP24-mediated annealing of U4/U6 di-snRNA. The LSM2-LSM8 complex binds U6 snRNA terminating with a non-cyclic 3' phosphate group. LSM2-LSM8 is probably also involved in degradation of nuclear pre-mRNA by targeting them for decapping. LSM2-LSM8 could be involved in processing of pre-tRNAs, pre-rRNAs and U3 snoRNA, although involvement may be indirect. The chain is LSM2-LSM8 complex subunit LSM8 (LSM8) from Saccharomyces cerevisiae (strain ATCC 204508 / S288c) (Baker's yeast).